Here is a 90-residue protein sequence, read N- to C-terminus: MEKLFVLVFALTLLAFSSEASPILTEKQAKQLLRSRRQDRPSKPGFPDEPMREYMHHLLALEHRAEEQFLEHWLNPHCKPHCDRNIVQPV.

The N-terminal stretch at methionine 1–alanine 20 is a signal peptide. The segment at glutamine 31–proline 50 is disordered.

The protein localises to the secreted. This is an uncharacterized protein from Rattus norvegicus (Rat).